We begin with the raw amino-acid sequence, 66 residues long: Cytoplasmic envelopment protein 3 (66 aa).

Gly-2 carries N-myristoyl glycine; by host lipidation.

The protein belongs to the herpesviridae cytoplasmic envelopment protein 3 family. In terms of assembly, interacts with cytoplasmic envelopment protein 2; this interaction is essential for the proper localization of each protein to the assembly complex and thus for the production of infectious virus. Phosphorylated. Phosphorylation does not seem to be required for recycling to the host Golgi apparatus. Packaging is selective for underphosphorylated forms.

The protein localises to the virion tegument. Its subcellular location is the virion membrane. It is found in the host cell membrane. The protein resides in the host Golgi apparatus membrane. Functionally, plays an important role in the cytoplasmic envelopment of tegument proteins and capsids during the assembly and egress processes. Also participates in viral entry at the fusion step probably by regulating the core fusion machinery. This Saimiriine herpesvirus 2 (strain 11) (SaHV-2) protein is Cytoplasmic envelopment protein 3 (38).